Here is a 244-residue protein sequence, read N- to C-terminus: 5-oxoprolinase subunit A (244 aa).

Belongs to the LamB/PxpA family. As to quaternary structure, forms a complex composed of PxpA, PxpB and PxpC.

The catalysed reaction is 5-oxo-L-proline + ATP + 2 H2O = L-glutamate + ADP + phosphate + H(+). Its function is as follows. Catalyzes the cleavage of 5-oxoproline to form L-glutamate coupled to the hydrolysis of ATP to ADP and inorganic phosphate. In Salmonella choleraesuis (strain SC-B67), this protein is 5-oxoprolinase subunit A.